A 158-amino-acid chain; its full sequence is MPLLLSGKKFHNDLKTNKCLAIFAPLEGGYETRLLRRMRAKGFKTFITSARGLGDPEVFLLKLHGVRPPHLGHQSVGRNGALGEVQQVIPQASELFNENDKNKLLWLLEGQVLSQSELESLIEICTNDNKLTIVVEMGGSRKLEWKPLSNYILDEFES.

The protein belongs to the complex I NdhN subunit family. NDH-1 can be composed of about 15 different subunits; different subcomplexes with different compositions have been identified which probably have different functions.

The protein resides in the cellular thylakoid membrane. It catalyses the reaction a plastoquinone + NADH + (n+1) H(+)(in) = a plastoquinol + NAD(+) + n H(+)(out). The enzyme catalyses a plastoquinone + NADPH + (n+1) H(+)(in) = a plastoquinol + NADP(+) + n H(+)(out). In terms of biological role, NDH-1 shuttles electrons from an unknown electron donor, via FMN and iron-sulfur (Fe-S) centers, to quinones in the respiratory and/or the photosynthetic chain. The immediate electron acceptor for the enzyme in this species is believed to be plastoquinone. Couples the redox reaction to proton translocation, and thus conserves the redox energy in a proton gradient. Cyanobacterial NDH-1 also plays a role in inorganic carbon-concentration. This chain is NAD(P)H-quinone oxidoreductase subunit N, found in Prochlorococcus marinus (strain AS9601).